A 370-amino-acid polypeptide reads, in one-letter code: Protein-tyrosine sulfotransferase 1 (370 aa).

Residues 1-8 (MVGKLKQN) lie on the Cytoplasmic side of the membrane. Residues 9–25 (LLLACLVISSVTVFYLG) traverse the membrane as a helical; Signal-anchor for type II membrane protein segment. At 26 to 370 (QHAMECHHRI…KEKPQTEQVE (345 aa)) the chain is on the lumenal side. The N-linked (GlcNAc...) asparagine glycan is linked to asparagine 60. 79–83 (RSGTT) is a binding site for 3'-phosphoadenylyl sulfate. The cysteines at positions 97 and 157 are disulfide-linked. Glutamate 100 serves as the catalytic Proton donor/acceptor. The interaction with peptide substrate stretch occupies residues 102–106 (RVIPR). Residues arginine 184, serine 192, and arginine 196 each contribute to the 3'-phosphoadenylyl sulfate site. Cysteine 226 and cysteine 234 are disulfide-bonded. A 3'-phosphoadenylyl sulfate-binding site is contributed by tyrosine 239. An N-linked (GlcNAc...) asparagine glycan is attached at asparagine 262. 3'-phosphoadenylyl sulfate is bound by residues 286–295 (STDQVIKPVN) and lysine 301.

This sequence belongs to the protein sulfotransferase family. In terms of assembly, homodimer. Can also form heterodimers with TPST2. Post-translationally, N-glycosylated. As to expression, ubiquitous. Detected in heart, brain, lung, liver, spleen, kidney, skeletal muscle and testis.

It localises to the golgi apparatus membrane. It carries out the reaction L-tyrosyl-[protein] + 3'-phosphoadenylyl sulfate = O-sulfo-L-tyrosine-[protein] + adenosine 3',5'-bisphosphate + H(+). Catalyzes the O-sulfation of tyrosine residues within acidic motifs of polypeptides, using 3'-phosphoadenylyl sulfate (PAPS) as cosubstrate. This is Protein-tyrosine sulfotransferase 1 (Tpst1) from Mus musculus (Mouse).